Consider the following 322-residue polypeptide: Acetyl-coenzyme A carboxylase carboxyl transferase subunit alpha (322 aa).

The CoA carboxyltransferase C-terminal domain occupies 32 to 293; it reads DISEEIARLE…KRALQDALRQ (262 aa).

Belongs to the AccA family. As to quaternary structure, acetyl-CoA carboxylase is a heterohexamer composed of biotin carboxyl carrier protein (AccB), biotin carboxylase (AccC) and two subunits each of ACCase subunit alpha (AccA) and ACCase subunit beta (AccD).

The protein resides in the cytoplasm. It catalyses the reaction N(6)-carboxybiotinyl-L-lysyl-[protein] + acetyl-CoA = N(6)-biotinyl-L-lysyl-[protein] + malonyl-CoA. Its pathway is lipid metabolism; malonyl-CoA biosynthesis; malonyl-CoA from acetyl-CoA: step 1/1. Its function is as follows. Component of the acetyl coenzyme A carboxylase (ACC) complex. First, biotin carboxylase catalyzes the carboxylation of biotin on its carrier protein (BCCP) and then the CO(2) group is transferred by the carboxyltransferase to acetyl-CoA to form malonyl-CoA. In Aromatoleum aromaticum (strain DSM 19018 / LMG 30748 / EbN1) (Azoarcus sp. (strain EbN1)), this protein is Acetyl-coenzyme A carboxylase carboxyl transferase subunit alpha.